The primary structure comprises 371 residues: Ferrochelatase (371 aa).

Fe cation contacts are provided by His218 and Glu299.

It belongs to the ferrochelatase family.

The protein localises to the cytoplasm. The catalysed reaction is heme b + 2 H(+) = protoporphyrin IX + Fe(2+). Its pathway is porphyrin-containing compound metabolism; protoheme biosynthesis; protoheme from protoporphyrin-IX: step 1/1. Its function is as follows. Catalyzes the ferrous insertion into protoporphyrin IX. The chain is Ferrochelatase from Cupriavidus pinatubonensis (strain JMP 134 / LMG 1197) (Cupriavidus necator (strain JMP 134)).